Here is a 78-residue protein sequence, read N- to C-terminus: Beta-defensin 12 (78 aa).

A signal peptide spans 1–27; sequence MALSRGTFYFGLALFFIVVELPSGSWA. 3 cysteine pairs are disulfide-bonded: Cys-46-Cys-73, Cys-53-Cys-67, and Cys-57-Cys-74.

It belongs to the beta-defensin family.

It localises to the secreted. Has antibacterial activity. In Rattus norvegicus (Rat), this protein is Beta-defensin 12 (Defb12).